A 198-amino-acid polypeptide reads, in one-letter code: Holliday junction branch migration complex subunit RuvA (198 aa).

A domain I region spans residues 1-63; that stretch reads MYDYIKGQLT…EDAHLLFGFH (63 aa). Positions 64–142 are domain II; that stretch reads TEDEKDVFLK…EAPQETGHTK (79 aa). Residues 143–147 form a flexible linker region; the sequence is ARSNK. Positions 148-198 are domain III; sequence AGNTQLDEAIEALLALGYTATELKKIRAFFEGTSETAEQYIKSALKLLMKG.

This sequence belongs to the RuvA family. Homotetramer. Forms an RuvA(8)-RuvB(12)-Holliday junction (HJ) complex. HJ DNA is sandwiched between 2 RuvA tetramers; dsDNA enters through RuvA and exits via RuvB. An RuvB hexamer assembles on each DNA strand where it exits the tetramer. Each RuvB hexamer is contacted by two RuvA subunits (via domain III) on 2 adjacent RuvB subunits; this complex drives branch migration. In the full resolvosome a probable DNA-RuvA(4)-RuvB(12)-RuvC(2) complex forms which resolves the HJ.

The protein resides in the cytoplasm. In terms of biological role, the RuvA-RuvB-RuvC complex processes Holliday junction (HJ) DNA during genetic recombination and DNA repair, while the RuvA-RuvB complex plays an important role in the rescue of blocked DNA replication forks via replication fork reversal (RFR). RuvA specifically binds to HJ cruciform DNA, conferring on it an open structure. The RuvB hexamer acts as an ATP-dependent pump, pulling dsDNA into and through the RuvAB complex. HJ branch migration allows RuvC to scan DNA until it finds its consensus sequence, where it cleaves and resolves the cruciform DNA. The polypeptide is Holliday junction branch migration complex subunit RuvA (Streptococcus pyogenes serotype M49 (strain NZ131)).